The following is a 113-amino-acid chain: Large ribosomal subunit protein bL19 (113 aa).

The protein belongs to the bacterial ribosomal protein bL19 family.

Its function is as follows. This protein is located at the 30S-50S ribosomal subunit interface and may play a role in the structure and function of the aminoacyl-tRNA binding site. The polypeptide is Large ribosomal subunit protein bL19 (rplS) (Mycobacterium bovis (strain ATCC BAA-935 / AF2122/97)).